We begin with the raw amino-acid sequence, 373 residues long: 3 beta-hydroxysteroid dehydrogenase/Delta 5--&gt;4-isomerase type 1 (373 aa).

NADP(+)-binding positions include 10 to 15 (GAGGFV), Tyr155, and Lys159. The active-site Proton donor is the Lys159. The helical transmembrane segment at 288 to 308 (LPLLYWLAFLLETVSFLLRPF) threads the bilayer.

It belongs to the 3-beta-HSD family. In terms of tissue distribution, adrenal glands, kidney, testes and ovaries.

It is found in the endoplasmic reticulum membrane. It localises to the mitochondrion membrane. The enzyme catalyses a 3beta-hydroxy-Delta(5)-steroid + NAD(+) = a 3-oxo-Delta(5)-steroid + NADH + H(+). It catalyses the reaction pregnenolone + NAD(+) = pregn-5-ene-3,20-dione + NADH + H(+). It carries out the reaction 3beta-hydroxyandrost-5-en-17-one + NAD(+) = androst-5-ene-3,17-dione + NADH + H(+). The catalysed reaction is androst-5-en-3beta,17beta-diol + NAD(+) = 17beta-hydroxy-androst-5-en-3-one + NADH + H(+). The enzyme catalyses a 3beta-hydroxysteroid + NADP(+) = a 3-oxosteroid + NADPH + H(+). It catalyses the reaction 5alpha-androstane-3beta,17beta-diol + NADP(+) = 17beta-hydroxy-5alpha-androstan-3-one + NADPH + H(+). It carries out the reaction 3beta-hydroxy-5alpha-androstan-17-one + NADP(+) = 5alpha-androstan-3,17-dione + NADPH + H(+). The catalysed reaction is a 3-oxo-Delta(5)-steroid = a 3-oxo-Delta(4)-steroid. The enzyme catalyses pregn-5-ene-3,20-dione = progesterone. It catalyses the reaction androst-5-ene-3,17-dione = androst-4-ene-3,17-dione. It carries out the reaction 17beta-hydroxy-androst-5-en-3-one = testosterone. The catalysed reaction is 5alpha-androstane-3beta,17beta-diol + NAD(+) = 17beta-hydroxy-5alpha-androstan-3-one + NADH + H(+). The protein operates within steroid hormone biosynthesis. It functions in the pathway steroid metabolism. A bifunctional enzyme responsible for the oxidation and isomerization of 3beta-hydroxy-Delta(5)-steroid precursors to 3-oxo-Delta(4)-steroids, an essential step in steroid hormone biosynthesis. Specifically catalyzes the conversion of pregnenolone to progesterone, dehydroepiandrosterone (DHEA) to 4-androstenedione, and androstenediol to testosterone. Additionally, catalyzes the interconversion between 3beta-hydroxy and 3-oxo-5alpha-androstane steroids controlling the bioavalability of the active forms. Specifically converts dihydrotestosterone to its inactive form 5alpha-androstanediol, that does not bind androgen receptor/AR. Also converts androstanedione, a precursor of testosterone and estrone, to epiandrosterone. Expected to use NAD(+) as preferred electron donor for the 3beta-hydroxy-steroid dehydrogenase activity and NADPH for the 3-ketosteroid reductase activity. This chain is 3 beta-hydroxysteroid dehydrogenase/Delta 5--&gt;4-isomerase type 1, found in Rattus norvegicus (Rat).